Consider the following 636-residue polypeptide: MNSNSTIGRTTLGESDTISLSFSEPSSSLNSRSTDVVFASTSTLVPQQGSLTSLPPVSSTATPTYYSTSLTYDETLHTSIDVSSTSTLVSSTDSSSSSEQDTYSSQYDPATSSYSIITPSMSIFSSTSPMSSSSSITSEWSSLTSTTPTLSSSATSLSSSWSSLSSPSSLLVSSSLSLSLSSSYSDTKLFSFDSRSSIFSPSTPTVISPSYTYLSSISATSFQITTTSELSSSWFSTISSPSTTSNKDTTFPSSSRNTSTSFYSSSLSSTNDFSTISKSSKLSPSASSSTVSISTISVPTSSSVSSSSSKVPSNRPSSSSSSDDTTSAYSSTYTFQSLQSTTSSSIPPTTQTPSTSTISTSPIPTSSQVFNTVAISSSEDSKTIYYFYTQTYDITDSSTTFVTGLPTTIAVAKSEVTSFSAPSSTITADMSFYQHWLDGSLDNNKNQGTSKTNTGTIVGSVVGSVGGILICVLVVWFMLVRKRKAKRHFKENDSFCHEIGRRTGFPTTAQAKEASLQAQDSGSQQRNTETASANNPFSNEFNFKARGNPPPVPPPRNVTAMNGSFQNMRSNFMDQENRFSYGSSFTYSSLGSSTQGGFSTLSSNSIRLGRGLDNDISHDERNTVQNNSQGFLREII.

The span at 1–18 (MNSNSTIGRTTLGESDTI) shows a compositional bias: polar residues. Disordered regions lie at residues 1–33 (MNSN…NSRS), 87–109 (TLVS…QYDP), 238–271 (ISSP…SSTN), 299–326 (PTSS…DDTT), and 339–362 (QSTT…STSP). A glycan (N-linked (GlcNAc...) asparagine) is linked at Asn4. Low complexity-rich tracts occupy residues 19–33 (SLSF…NSRS) and 87–108 (TLVS…SQYD). Asn257 carries N-linked (GlcNAc...) asparagine glycosylation. Residues 457–477 (IVGSVVGSVGGILICVLVVWF) form a helical membrane-spanning segment. Asn492 carries an N-linked (GlcNAc...) asparagine glycan. Polar residues predominate over residues 510 to 541 (QAKEASLQAQDSGSQQRNTETASANNPFSNEF). A disordered region spans residues 510-551 (QAKEASLQAQDSGSQQRNTETASANNPFSNEFNFKARGNPPP). Residue Lys512 forms a Glycyl lysine isopeptide (Lys-Gly) (interchain with G-Cter in ubiquitin) linkage. 3 N-linked (GlcNAc...) asparagine glycosylation sites follow: Asn557, Asn562, and Asn626. The residue at position 628 (Ser628) is a Phosphoserine.

The protein belongs to the TDA7 family.

It is found in the vacuole membrane. The chain is Topoisomerase I damage affected protein 7 (TDA7) from Saccharomyces cerevisiae (strain YJM789) (Baker's yeast).